The primary structure comprises 92 residues: Small ribosomal subunit protein uS19 (92 aa).

This sequence belongs to the universal ribosomal protein uS19 family.

Its function is as follows. Protein S19 forms a complex with S13 that binds strongly to the 16S ribosomal RNA. The protein is Small ribosomal subunit protein uS19 of Brucella ovis (strain ATCC 25840 / 63/290 / NCTC 10512).